The following is a 415-amino-acid chain: Gamma-glutamyl phosphate reductase (415 aa).

Belongs to the gamma-glutamyl phosphate reductase family.

It is found in the cytoplasm. It catalyses the reaction L-glutamate 5-semialdehyde + phosphate + NADP(+) = L-glutamyl 5-phosphate + NADPH + H(+). The protein operates within amino-acid biosynthesis; L-proline biosynthesis; L-glutamate 5-semialdehyde from L-glutamate: step 2/2. Catalyzes the NADPH-dependent reduction of L-glutamate 5-phosphate into L-glutamate 5-semialdehyde and phosphate. The product spontaneously undergoes cyclization to form 1-pyrroline-5-carboxylate. The chain is Gamma-glutamyl phosphate reductase from Listeria monocytogenes serotype 4a (strain HCC23).